A 295-amino-acid polypeptide reads, in one-letter code: MVQLFHLTFTQGFFIGQLSVIVIVYIFLRFFLFCTKEELKNVQEESYPLSPSNEKSTTEFNDATHKVTPSLSEIYDVKTHEEESLDWFNVLVAQALSQIRQDAVSDDAALKKLQTLFNGKRKPSFLGPIHIKSISLGQRYPVFSNCRIQAQPDDTNGLRATMDLSLEDDIHFVVNTSAVLNVPRPAFAMLPVSLSVRIVHIRGKLSIYFSQSSKSAKRAYLNFTFDPDFDMGIEIQSLVGSRSKLQDIPKIAHIIETRIRKWFITRCVSPQFQQISIPNIWPSSAREGHRQKSTE.

Topologically, residues 1–12 (MVQLFHLTFTQG) are lumenal. The helical transmembrane segment at 13–33 (FFIGQLSVIVIVYIFLRFFLF) threads the bilayer. The Cytoplasmic segment spans residues 34–295 (CTKEELKNVQ…REGHRQKSTE (262 aa)). An SMP-LTD domain is found at 81–278 (EEESLDWFNV…SPQFQQISIP (198 aa)).

This sequence belongs to the MMM1 family. In terms of assembly, homodimer. Component of the ER-mitochondria encounter structure (ERMES) or MDM complex, composed of mmm1, mdm10, mdm12 and mdm34. A mmm1 homodimer associates with one molecule of mdm12 on each side in a pairwise head-to-tail manner, and the SMP-LTD domains of mmm1 and mdm12 generate a continuous hydrophobic tunnel for phospholipid trafficking.

The protein resides in the endoplasmic reticulum membrane. Component of the ERMES/MDM complex, which serves as a molecular tether to connect the endoplasmic reticulum (ER) and mitochondria. Components of this complex are involved in the control of mitochondrial shape and protein biogenesis, and function in nonvesicular lipid trafficking between the ER and mitochondria. The mdm12-mmm1 subcomplex functions in the major beta-barrel assembly pathway that is responsible for biogenesis of all outer membrane beta-barrel proteins, and acts in a late step after the SAM complex. The mdm10-mdm12-mmm1 subcomplex further acts in the TOM40-specific pathway after the action of the mdm12-mmm1 complex. Essential for establishing and maintaining the structure of mitochondria and maintenance of mtDNA nucleoids. The polypeptide is Maintenance of mitochondrial morphology protein 1 (Schizosaccharomyces japonicus (strain yFS275 / FY16936) (Fission yeast)).